The sequence spans 457 residues: Putative adhesion G protein-coupled receptor E4P (457 aa).

A signal peptide spans 1 to 14; that stretch reads MGSRFLLVLLSGAS. 6 disulfide bridges follow: cysteine 15/cysteine 24, cysteine 18/cysteine 30, cysteine 32/cysteine 52, cysteine 58/cysteine 71, cysteine 65/cysteine 80, and cysteine 82/cysteine 103. The region spanning 15–53 is the EGF-like 1 domain; the sequence is CPPCPKYASCHNSTHCTCEDGFRARSGRTYFHDSSEKCE. At 16–191 the chain is on the extracellular side; it reads PPCPKYASCH…LAPKEDPVLT (176 aa). N-linked (GlcNAc...) asparagine glycosylation occurs at asparagine 26. An EGF-like 2; calcium-binding domain is found at 54-104; sequence DINECETGLAKCKYKAYCRNKVGGYICSCLVKYTLFNFLAGIIDYDHPDCY. N-linked (GlcNAc...) asparagine glycosylation is found at asparagine 106 and asparagine 162. One can recognise a GAIN-B domain in the interval 134–186; it reads DKRTKHICVYWEGSEGGWSTEGCSHVHSNGSYTKCKCFHLSSFAVLVALAPKE. 2 cysteine pairs are disulfide-bonded: cysteine 141–cysteine 168 and cysteine 156–cysteine 170. Residues 141 to 186 are GPS; that stretch reads CVYWEGSEGGWSTEGCSHVHSNGSYTKCKCFHLSSFAVLVALAPKE. The chain crosses the membrane as a helical span at residues 192–212; sequence VITQVGLTISLLCLFLAILTF. At 213–223 the chain is on the cytoplasmic side; it reads LLCRPIQNTST. The chain crosses the membrane as a helical span at residues 224 to 244; the sequence is SLHLELSLCLFLAHLLFLTGI. An N-linked (GlcNAc...) asparagine glycan is attached at asparagine 245. At 245–250 the chain is on the extracellular side; it reads NRTEPE. A helical transmembrane segment spans residues 251-271; it reads VLCSIIAGLLHFLYLACFTWM. Topologically, residues 272-299 are cytoplasmic; that stretch reads LLEGLHLFLTVRNLKVANYTSTGRFKKR. A helical membrane pass occupies residues 300 to 320; it reads FMYPVGYGIPAVIIAVSAIVG. Topologically, residues 321–336 are extracellular; the sequence is PQNYGTFTCWLKLDKG. Residues 337–357 traverse the membrane as a helical segment; that stretch reads FIWSFMGPVAVIILINLVFYF. The Cytoplasmic portion of the chain corresponds to 358–384; it reads QVLWILRSKLSSLNKEVSTIQDTRVMT. The chain crosses the membrane as a helical span at residues 385-405; that stretch reads FKAISQLFILGCSWGLGFFMV. Topologically, residues 406 to 413 are extracellular; it reads EEVGKTIG. A helical transmembrane segment spans residues 414 to 434; it reads SIIAYSFTIINTLQGVLLFVV. The Cytoplasmic portion of the chain corresponds to 435 to 457; it reads HCLLNRQVRLIILSVISLVPKSN.

The protein belongs to the G-protein coupled receptor 2 family. Adhesion G-protein coupled receptor (ADGR) subfamily. Forms a heterodimer, consisting of a large extracellular region (alpha subunit) non-covalently linked to a seven-transmembrane moiety (beta subunit). Glycosylated. Post-translationally, proteolytically cleaved into 2 subunits, an extracellular alpha subunit and a seven-transmembrane subunit.

Its subcellular location is the cell membrane. The protein resides in the secreted. In terms of biological role, may mediate the cellular interaction between myeloid cells and B-cells. In Homo sapiens (Human), this protein is Putative adhesion G protein-coupled receptor E4P.